Here is a 429-residue protein sequence, read N- to C-terminus: Enolase (429 aa).

Glutamine 165 provides a ligand contact to (2R)-2-phosphoglycerate. Glutamate 207 (proton donor) is an active-site residue. Mg(2+) is bound by residues aspartate 244, glutamate 287, and aspartate 314. (2R)-2-phosphoglycerate is bound by residues lysine 339, arginine 368, serine 369, and lysine 390. Lysine 339 (proton acceptor) is an active-site residue.

Belongs to the enolase family. Mg(2+) is required as a cofactor.

The protein resides in the cytoplasm. It is found in the secreted. The protein localises to the cell surface. The enzyme catalyses (2R)-2-phosphoglycerate = phosphoenolpyruvate + H2O. It functions in the pathway carbohydrate degradation; glycolysis; pyruvate from D-glyceraldehyde 3-phosphate: step 4/5. Its function is as follows. Catalyzes the reversible conversion of 2-phosphoglycerate (2-PG) into phosphoenolpyruvate (PEP). It is essential for the degradation of carbohydrates via glycolysis. The protein is Enolase of Roseiflexus sp. (strain RS-1).